A 542-amino-acid chain; its full sequence is Ribonuclease Y (542 aa).

The helical transmembrane segment at 1 to 21 threads the bilayer; that stretch reads MLIALIAVSVLAVAAIIGSLA. Positions 52 to 92 are disordered; sequence SRASQDLADSRKDVAKARAELESSRTRASDEARRADNADQA. Over residues 59–92 the composition is skewed to basic and acidic residues; the sequence is ADSRKDVAKARAELESSRTRASDEARRADNADQA. The KH domain occupies 229–289; sequence VVSVVPLPSN…MRREVARQAL (61 aa). Positions 355-449 constitute an HD domain; sequence VLDHCVECAR…VKAADAISAA (95 aa).

This sequence belongs to the RNase Y family.

It localises to the cell membrane. Its function is as follows. Endoribonuclease that initiates mRNA decay. This chain is Ribonuclease Y, found in Cutibacterium acnes (strain DSM 16379 / KPA171202) (Propionibacterium acnes).